Consider the following 326-residue polypeptide: Biotin synthase (326 aa).

The Radical SAM core domain maps to 51–278 (NEVQRSTLLS…TSYVRLSAGR (228 aa)). [4Fe-4S] cluster-binding residues include Cys66, Cys70, and Cys73. Residues Cys110, Cys141, Cys201, and Arg273 each contribute to the [2Fe-2S] cluster site.

This sequence belongs to the radical SAM superfamily. Biotin synthase family. In terms of assembly, homodimer. The cofactor is [4Fe-4S] cluster. Requires [2Fe-2S] cluster as cofactor.

It catalyses the reaction (4R,5S)-dethiobiotin + (sulfur carrier)-SH + 2 reduced [2Fe-2S]-[ferredoxin] + 2 S-adenosyl-L-methionine = (sulfur carrier)-H + biotin + 2 5'-deoxyadenosine + 2 L-methionine + 2 oxidized [2Fe-2S]-[ferredoxin]. It functions in the pathway cofactor biosynthesis; biotin biosynthesis; biotin from 7,8-diaminononanoate: step 2/2. Catalyzes the conversion of dethiobiotin (DTB) to biotin by the insertion of a sulfur atom into dethiobiotin via a radical-based mechanism. The sequence is that of Biotin synthase from Azoarcus sp. (strain BH72).